A 163-amino-acid polypeptide reads, in one-letter code: Cyanate hydratase (163 aa).

Residues R103, E106, and S129 contribute to the active site.

It belongs to the cyanase family.

The enzyme catalyses cyanate + hydrogencarbonate + 3 H(+) = NH4(+) + 2 CO2. In terms of biological role, catalyzes the reaction of cyanate with bicarbonate to produce ammonia and carbon dioxide. This is Cyanate hydratase from Ajellomyces capsulatus (strain H143) (Darling's disease fungus).